Here is a 323-residue protein sequence, read N- to C-terminus: o-succinylbenzoate synthase (323 aa).

Lys134 acts as the Proton donor in catalysis. 3 residues coordinate Mg(2+): Asp162, Glu191, and Asp214. The active-site Proton acceptor is Lys236.

This sequence belongs to the mandelate racemase/muconate lactonizing enzyme family. MenC type 1 subfamily. It depends on a divalent metal cation as a cofactor.

The catalysed reaction is (1R,6R)-6-hydroxy-2-succinyl-cyclohexa-2,4-diene-1-carboxylate = 2-succinylbenzoate + H2O. It participates in quinol/quinone metabolism; 1,4-dihydroxy-2-naphthoate biosynthesis; 1,4-dihydroxy-2-naphthoate from chorismate: step 4/7. Its pathway is quinol/quinone metabolism; menaquinone biosynthesis. Converts 2-succinyl-6-hydroxy-2,4-cyclohexadiene-1-carboxylate (SHCHC) to 2-succinylbenzoate (OSB). The chain is o-succinylbenzoate synthase from Yersinia pestis bv. Antiqua (strain Antiqua).